The following is a 75-amino-acid chain: Large ribosomal subunit protein uL30 (75 aa).

The protein belongs to the universal ribosomal protein uL30 family. As to quaternary structure, part of the 50S ribosomal subunit.

The sequence is that of Large ribosomal subunit protein uL30 from Roseiflexus castenholzii (strain DSM 13941 / HLO8).